Consider the following 479-residue polypeptide: Aspartyl/glutamyl-tRNA(Asn/Gln) amidotransferase subunit B (479 aa).

The protein belongs to the GatB/GatE family. GatB subfamily. As to quaternary structure, heterotrimer of A, B and C subunits.

It carries out the reaction L-glutamyl-tRNA(Gln) + L-glutamine + ATP + H2O = L-glutaminyl-tRNA(Gln) + L-glutamate + ADP + phosphate + H(+). The enzyme catalyses L-aspartyl-tRNA(Asn) + L-glutamine + ATP + H2O = L-asparaginyl-tRNA(Asn) + L-glutamate + ADP + phosphate + 2 H(+). Allows the formation of correctly charged Asn-tRNA(Asn) or Gln-tRNA(Gln) through the transamidation of misacylated Asp-tRNA(Asn) or Glu-tRNA(Gln) in organisms which lack either or both of asparaginyl-tRNA or glutaminyl-tRNA synthetases. The reaction takes place in the presence of glutamine and ATP through an activated phospho-Asp-tRNA(Asn) or phospho-Glu-tRNA(Gln). In Streptococcus equi subsp. zooepidemicus (strain MGCS10565), this protein is Aspartyl/glutamyl-tRNA(Asn/Gln) amidotransferase subunit B.